The primary structure comprises 181 residues: Large ribosomal subunit protein uL6 (181 aa).

Belongs to the universal ribosomal protein uL6 family. As to quaternary structure, part of the 50S ribosomal subunit.

In terms of biological role, this protein binds to the 23S rRNA, and is important in its secondary structure. It is located near the subunit interface in the base of the L7/L12 stalk, and near the tRNA binding site of the peptidyltransferase center. This is Large ribosomal subunit protein uL6 from Hydrogenobaculum sp. (strain Y04AAS1).